The chain runs to 108 residues: PTS system fructose-like EIIB component 1 (108 aa).

Residues 1 to 101 (MSKKLIALCA…AAGIIKEIEE (101 aa)) form the PTS EIIB type-2 domain. The active-site Phosphocysteine intermediate is C11. C11 bears the Phosphocysteine; by EIIA mark.

The protein localises to the cytoplasm. The enzyme catalyses D-fructose(out) + N(pros)-phospho-L-histidyl-[protein] = D-fructose 1-phosphate(in) + L-histidyl-[protein]. In terms of biological role, the phosphoenolpyruvate-dependent sugar phosphotransferase system (sugar PTS), a major carbohydrate active transport system, catalyzes the phosphorylation of incoming sugar substrates concomitantly with their translocation across the cell membrane. The enzyme II FryABC PTS system is involved in fructose transport. This chain is PTS system fructose-like EIIB component 1 (fryB), found in Shigella flexneri.